Reading from the N-terminus, the 89-residue chain is Small ribosomal subunit protein uS15 (89 aa).

Positions 1 to 21 are enriched in basic and acidic residues; sequence MVMTAEDKAQVIGEHKKHDGD. The segment at 1–24 is disordered; the sequence is MVMTAEDKAQVIGEHKKHDGDTGS.

Belongs to the universal ribosomal protein uS15 family. Part of the 30S ribosomal subunit. Forms a bridge to the 50S subunit in the 70S ribosome, contacting the 23S rRNA.

Its function is as follows. One of the primary rRNA binding proteins, it binds directly to 16S rRNA where it helps nucleate assembly of the platform of the 30S subunit by binding and bridging several RNA helices of the 16S rRNA. Forms an intersubunit bridge (bridge B4) with the 23S rRNA of the 50S subunit in the ribosome. The sequence is that of Small ribosomal subunit protein uS15 from Solidesulfovibrio magneticus (strain ATCC 700980 / DSM 13731 / RS-1) (Desulfovibrio magneticus).